The sequence spans 443 residues: UDP-N-acetylmuramate--L-alanine ligase (443 aa).

An ATP-binding site is contributed by 110–116 (GAHGKTS).

The protein belongs to the MurCDEF family.

Its subcellular location is the cytoplasm. It carries out the reaction UDP-N-acetyl-alpha-D-muramate + L-alanine + ATP = UDP-N-acetyl-alpha-D-muramoyl-L-alanine + ADP + phosphate + H(+). It functions in the pathway cell wall biogenesis; peptidoglycan biosynthesis. Functionally, cell wall formation. This is UDP-N-acetylmuramate--L-alanine ligase from Lactococcus lactis subsp. cremoris (strain SK11).